We begin with the raw amino-acid sequence, 341 residues long: Phosphate acyltransferase (341 aa).

It belongs to the PlsX family. Homodimer. Probably interacts with PlsY.

The protein resides in the cytoplasm. It catalyses the reaction a fatty acyl-[ACP] + phosphate = an acyl phosphate + holo-[ACP]. The protein operates within lipid metabolism; phospholipid metabolism. Its function is as follows. Catalyzes the reversible formation of acyl-phosphate (acyl-PO(4)) from acyl-[acyl-carrier-protein] (acyl-ACP). This enzyme utilizes acyl-ACP as fatty acyl donor, but not acyl-CoA. This is Phosphate acyltransferase from Vibrio atlanticus (strain LGP32) (Vibrio splendidus (strain Mel32)).